The primary structure comprises 110 residues: UPF0122 protein RBAM_015800 (110 aa).

Belongs to the UPF0122 family.

Might take part in the signal recognition particle (SRP) pathway. This is inferred from the conservation of its genetic proximity to ftsY/ffh. May be a regulatory protein. In Bacillus velezensis (strain DSM 23117 / BGSC 10A6 / LMG 26770 / FZB42) (Bacillus amyloliquefaciens subsp. plantarum), this protein is UPF0122 protein RBAM_015800.